The following is a 634-amino-acid chain: DNA-directed RNA polymerase subunit gamma (634 aa).

Zn(2+) contacts are provided by C74, C76, C89, and C92. D471, D473, and D475 together coordinate Mg(2+).

It belongs to the RNA polymerase beta' chain family. RpoC1 subfamily. In terms of assembly, in cyanobacteria the RNAP catalytic core is composed of 2 alpha, 1 beta, 1 beta', 1 gamma and 1 omega subunit. When a sigma factor is associated with the core the holoenzyme is formed, which can initiate transcription. The cofactor is Mg(2+). It depends on Zn(2+) as a cofactor.

It carries out the reaction RNA(n) + a ribonucleoside 5'-triphosphate = RNA(n+1) + diphosphate. DNA-dependent RNA polymerase catalyzes the transcription of DNA into RNA using the four ribonucleoside triphosphates as substrates. The chain is DNA-directed RNA polymerase subunit gamma from Prochlorococcus marinus (strain AS9601).